Reading from the N-terminus, the 582-residue chain is Aspartate--tRNA ligase (582 aa).

Glu174 contacts L-aspartate. Positions 198-201 (QITK) are aspartate. Arg220 is a binding site for L-aspartate. ATP-binding positions include 220–222 (RDE) and Gln229. His443 contributes to the L-aspartate binding site. Glu477 contacts ATP. Arg484 provides a ligand contact to L-aspartate. 529 to 532 (GLDR) contributes to the ATP binding site.

Belongs to the class-II aminoacyl-tRNA synthetase family. Type 1 subfamily. Homodimer.

The protein resides in the cytoplasm. The catalysed reaction is tRNA(Asp) + L-aspartate + ATP = L-aspartyl-tRNA(Asp) + AMP + diphosphate. Catalyzes the attachment of L-aspartate to tRNA(Asp) in a two-step reaction: L-aspartate is first activated by ATP to form Asp-AMP and then transferred to the acceptor end of tRNA(Asp). This is Aspartate--tRNA ligase from Streptococcus equi subsp. zooepidemicus (strain MGCS10565).